A 344-amino-acid chain; its full sequence is MIGNFSCETDEIKRIVLNFALQVQKKFPSNFQKNKKRIIVIAGPTCCGKSALALNLAQTMDGEIISADSMQVYRGMDIGTAKATKEERLFVPHHLIDIRDIQESFNVVDFYYEARQACQKILDQGNVPIIAGGSGFYLHALLYGPPSGPPSVPEVRKSFEDEIERLGSEILYERLSQLDPQYAKTITKNDKQKIVRALEIMMLTNKKVSKLSWKGRRKPQNYDFRCWFLHRPKEKLYERIDKRCDKMLEEGFMDEVRHLDSLGIRGNSSASQAIGYRQALNFLKTEQTASQYQEFIRSFKQATRHYAKRQFTWFRKEPLFRWLDVDMHDPEVVFDMILKDYELL.

Residue 43 to 50 (GPTCCGKS) participates in ATP binding. Position 45-50 (45-50 (TCCGKS)) interacts with substrate. Residues 68–71 (DSMQ) form an interaction with substrate tRNA region.

Belongs to the IPP transferase family. As to quaternary structure, monomer. The cofactor is Mg(2+).

It catalyses the reaction adenosine(37) in tRNA + dimethylallyl diphosphate = N(6)-dimethylallyladenosine(37) in tRNA + diphosphate. Catalyzes the transfer of a dimethylallyl group onto the adenine at position 37 in tRNAs that read codons beginning with uridine, leading to the formation of N6-(dimethylallyl)adenosine (i(6)A). In Protochlamydia amoebophila (strain UWE25), this protein is tRNA dimethylallyltransferase.